The following is a 107-amino-acid chain: UPF0145 protein YbjQ (107 aa).

The protein belongs to the UPF0145 family.

The chain is UPF0145 protein YbjQ from Escherichia coli O139:H28 (strain E24377A / ETEC).